The primary structure comprises 313 residues: Malate dehydrogenase (313 aa).

Residues 11-16 (GAGSIG) and Asp-35 contribute to the NAD(+) site. Positions 84 and 90 each coordinate substrate. NAD(+)-binding positions include Asn-97 and 120-122 (VTN). Substrate is bound by residues Asn-122 and Arg-153. The Proton acceptor role is filled by His-177.

This sequence belongs to the LDH/MDH superfamily. MDH type 3 family.

The catalysed reaction is (S)-malate + NAD(+) = oxaloacetate + NADH + H(+). Catalyzes the reversible oxidation of malate to oxaloacetate. This Ehrlichia chaffeensis (strain ATCC CRL-10679 / Arkansas) protein is Malate dehydrogenase.